Consider the following 551-residue polypeptide: Putative transport protein NTHI0043 (551 aa).

A run of 5 helical transmembrane segments spans residues 4–24 (IAIT…IGHW), 28–48 (GVGL…HFTN), 65–85 (FGLI…FFSS), 95–115 (AFAI…HKIA), and 157–177 (VSYA…MWLI). RCK C-terminal domains lie at 191–275 (RFNA…IIGY) and 277–360 (VDAP…VIGN). A run of 6 helical transmembrane segments spans residues 370–390 (MLPV…PFYI), 402–424 (AGGP…LYWF), 438–458 (IVLF…DTLV), 463–483 (LEWM…TGIL), 492–512 (YLTI…LAFA), and 529–549 (VYPL…VLLW).

This sequence belongs to the AAE transporter (TC 2.A.81) family. YidE subfamily.

It localises to the cell membrane. The protein is Putative transport protein NTHI0043 of Haemophilus influenzae (strain 86-028NP).